Reading from the N-terminus, the 468-residue chain is 6-phospho-beta-galactosidase (468 aa).

The D-galactose 6-phosphate site is built by Gln-19, His-116, Asn-159, Glu-160, and Asn-297. Catalysis depends on Glu-160, which acts as the Proton donor. Glu-375 functions as the Nucleophile in the catalytic mechanism. D-galactose 6-phosphate-binding residues include Ser-428, Trp-429, Lys-435, and Tyr-437.

It belongs to the glycosyl hydrolase 1 family.

It carries out the reaction a 6-phospho-beta-D-galactoside + H2O = D-galactose 6-phosphate + an alcohol. The protein operates within carbohydrate metabolism; lactose degradation; D-galactose 6-phosphate and beta-D-glucose from lactose 6-phosphate: step 1/1. This is 6-phospho-beta-galactosidase from Streptococcus sanguinis (strain SK36).